Consider the following 356-residue polypeptide: Cobalt-precorrin-5B C(1)-methyltransferase (356 aa).

Belongs to the CbiD family.

It catalyses the reaction Co-precorrin-5B + S-adenosyl-L-methionine = Co-precorrin-6A + S-adenosyl-L-homocysteine. The protein operates within cofactor biosynthesis; adenosylcobalamin biosynthesis; cob(II)yrinate a,c-diamide from sirohydrochlorin (anaerobic route): step 6/10. Functionally, catalyzes the methylation of C-1 in cobalt-precorrin-5B to form cobalt-precorrin-6A. This chain is Cobalt-precorrin-5B C(1)-methyltransferase, found in Geobacter sp. (strain M21).